Reading from the N-terminus, the 184-residue chain is Protein DMP2 (184 aa).

A run of 4 helical transmembrane segments spans residues 19-39 (LIKL…PVLT), 45-65 (LLIN…SCCF), 105-125 (VGDF…SLLD), and 142-162 (IFLM…FTVF).

Belongs to the plant DMP1 protein family. In terms of tissue distribution, expressed constitutively in leaves, stems, flowers, siliques and roots.

Its subcellular location is the endoplasmic reticulum membrane. It localises to the vacuole membrane. Functionally, involved in membrane remodeling. The sequence is that of Protein DMP2 from Arabidopsis thaliana (Mouse-ear cress).